We begin with the raw amino-acid sequence, 259 residues long: BTB/POZ domain-containing protein KCTD4 (259 aa).

The segment at 1–22 (MEHKINRREKEKDYEGKHNSLE) is disordered. A BTB domain is found at 33–134 (TLMTLNVGGY…EVKSRWEKEQ (102 aa)).

This Bos taurus (Bovine) protein is BTB/POZ domain-containing protein KCTD4 (KCTD4).